The chain runs to 278 residues: 2-succinyl-6-hydroxy-2,4-cyclohexadiene-1-carboxylate synthase (278 aa).

Belongs to the AB hydrolase superfamily. MenH family. As to quaternary structure, monomer.

It carries out the reaction 5-enolpyruvoyl-6-hydroxy-2-succinyl-cyclohex-3-ene-1-carboxylate = (1R,6R)-6-hydroxy-2-succinyl-cyclohexa-2,4-diene-1-carboxylate + pyruvate. It functions in the pathway quinol/quinone metabolism; 1,4-dihydroxy-2-naphthoate biosynthesis; 1,4-dihydroxy-2-naphthoate from chorismate: step 3/7. Its pathway is quinol/quinone metabolism; menaquinone biosynthesis. Functionally, catalyzes a proton abstraction reaction that results in 2,5-elimination of pyruvate from 2-succinyl-5-enolpyruvyl-6-hydroxy-3-cyclohexene-1-carboxylate (SEPHCHC) and the formation of 2-succinyl-6-hydroxy-2,4-cyclohexadiene-1-carboxylate (SHCHC). This Photorhabdus laumondii subsp. laumondii (strain DSM 15139 / CIP 105565 / TT01) (Photorhabdus luminescens subsp. laumondii) protein is 2-succinyl-6-hydroxy-2,4-cyclohexadiene-1-carboxylate synthase.